Here is a 354-residue protein sequence, read N- to C-terminus: Uroporphyrinogen decarboxylase (354 aa).

Substrate-binding positions include 25–29, aspartate 75, tyrosine 152, threonine 207, and histidine 330; that span reads RQAGR.

It belongs to the uroporphyrinogen decarboxylase family. As to quaternary structure, homodimer.

The protein resides in the cytoplasm. The enzyme catalyses uroporphyrinogen III + 4 H(+) = coproporphyrinogen III + 4 CO2. It participates in porphyrin-containing compound metabolism; protoporphyrin-IX biosynthesis; coproporphyrinogen-III from 5-aminolevulinate: step 4/4. Its function is as follows. Catalyzes the decarboxylation of four acetate groups of uroporphyrinogen-III to yield coproporphyrinogen-III. This Xanthomonas euvesicatoria pv. vesicatoria (strain 85-10) (Xanthomonas campestris pv. vesicatoria) protein is Uroporphyrinogen decarboxylase.